Reading from the N-terminus, the 64-residue chain is Frontoxin V (64 aa).

5 disulfide bridges follow: cysteine 3–cysteine 24, cysteine 6–cysteine 11, cysteine 17–cysteine 41, cysteine 45–cysteine 57, and cysteine 58–cysteine 63.

In terms of tissue distribution, expressed by the venom gland.

It is found in the secreted. Its function is as follows. Produces peripheral paralysis by blocking neuromuscular transmission at the postsynaptic site. Binds to the muscular nicotinic acetylcholine receptor (nAChR). The chain is Frontoxin V from Micrurus frontalis (Coral snake).